The chain runs to 298 residues: Ribosomal protein L11 methyltransferase (298 aa).

S-adenosyl-L-methionine-binding residues include threonine 139, glycine 163, aspartate 185, and asparagine 232.

It belongs to the methyltransferase superfamily. PrmA family.

The protein resides in the cytoplasm. It carries out the reaction L-lysyl-[protein] + 3 S-adenosyl-L-methionine = N(6),N(6),N(6)-trimethyl-L-lysyl-[protein] + 3 S-adenosyl-L-homocysteine + 3 H(+). Functionally, methylates ribosomal protein L11. This chain is Ribosomal protein L11 methyltransferase, found in Gloeothece citriformis (strain PCC 7424) (Cyanothece sp. (strain PCC 7424)).